Reading from the N-terminus, the 872-residue chain is Potassium voltage-gated channel subfamily KQT member 3 (872 aa).

Residues 1–43 form a disordered region; the sequence is MGLKARRAAGAAGGGGDGGGGGGGAANPAGGDAAAAGDEERKV. Topologically, residues 1-120 are cytoplasmic; the sequence is MGLKARRAAG…IYDALERPRG (120 aa). Positions 11-25 are enriched in gly residues; that stretch reads AAGGGGDGGGGGGGA. Residues 26-36 are compositionally biased toward low complexity; the sequence is ANPAGGDAAAA. T81 bears the Phosphothreonine mark. A helical transmembrane segment spans residues 121–143; sequence WALLYHALVFLIVLGCLILAVLT. Topologically, residues 144 to 153 are extracellular; sequence TFKEYETVSG. A helical membrane pass occupies residues 154-175; it reads DWLLLLETFAIFIFGAEFALRI. Topologically, residues 176 to 193 are cytoplasmic; sequence WAAGCCCRYKGWRGRLKF. A helical membrane pass occupies residues 194–213; the sequence is ARKPLCMLDIFVLIASVPVV. The Extracellular portion of the chain corresponds to 214–225; that stretch reads AVGNQGNVLATS. Residues 226–244 traverse the membrane as a helical; Voltage-sensor segment; it reads LRSLRFLQILRMLRMDRRG. R243 contributes to the a 1,2-diacyl-sn-glycero-3-phospho-(1D-myo-inositol-4,5-bisphosphate) binding site. Topologically, residues 245-256 are cytoplasmic; it reads GTWKLLGSAICA. T246 carries the post-translational modification Phosphothreonine. Residues 257–282 traverse the membrane as a helical segment; the sequence is HSKELITAWYIGFLTLILSSFLVYLV. K259 provides a ligand contact to a 1,2-diacyl-sn-glycero-3-phospho-(1D-myo-inositol-4,5-bisphosphate). Topologically, residues 283–302 are extracellular; the sequence is EKDVPEVDAQGEEMKEEFET. An intramembrane region (pore-forming) is located at residues 303-315; sequence YADALWWGLITLA. Residues 316 to 321 carry the Selectivity filter motif; that stretch reads TIGYGD. Topologically, residues 316-326 are extracellular; the sequence is TIGYGDKTPKT. A helical membrane pass occupies residues 327-353; that stretch reads WEGRLIAATFSLIGVSFFALPAGILGS. Residues 354-872 are Cytoplasmic-facing; the sequence is GLALKVQEQH…SVWTPSNKPI (519 aa). A mediates interaction with calmodulin region spans residues 356–537; that stretch reads ALKVQEQHRQ…RLYKKKFKET (182 aa). K366 is an a 1,2-diacyl-sn-glycero-3-phospho-(1D-myo-inositol-4,5-bisphosphate) binding site. Disordered regions lie at residues 575 to 611 and 764 to 872; these read GPPSTPKHKKSQKGSAFTFPSQQSPRNEPYVARPSTS and ADLQ…NKPI. Composition is skewed to polar residues over residues 587 to 600 and 843 to 872; these read KGSAFTFPSQQSPR and DPFTPSGSMPLSSTGDGISDSVWTPSNKPI.

The protein belongs to the potassium channel family. KQT (TC 1.A.1.15) subfamily. Kv7.3/KCNQ3 sub-subfamily. Heterotetramer with KCNQ2; forms heterotetrameric native M-channel responsible for the M-current. Interacts with calmodulin; the interaction is calcium-independent, constitutive and participates in the proper assembly of a functional M-channel. Heteromultimer with KCNQ5. May associate with KCNE2. Interacts with IQCJ-SCHIP1. Interacts (via the pore module) with SLC5A3/SMIT1; forms a coregulatory complex that alters ion selectivity, voltage dependence and gating kinetics of the channel. In terms of processing, KCNQ2/KCNQ3 are ubiquitinated by NEDD4L. Ubiquitination leads to protein degradation. Degradation induced by NEDD4L is inhibited by USP36. As to expression, predominantly expressed in brain.

The protein localises to the cell membrane. The catalysed reaction is K(+)(in) = K(+)(out). It catalyses the reaction Rb(+)(in) = Rb(+)(out). The enzyme catalyses Cs(+)(in) = Cs(+)(out). It carries out the reaction Na(+)(in) = Na(+)(out). Phosphatidylinositol-4,5-bisphosphate (PIP2) potentiates the activation of KCNQ channels by enhancing the electro-mechanical coupling of the voltage-sensing domain (VSD) and the pore-forming domain (PD). In the closed state of the channel, PIP2 is anchored at the S2-S3 loop; upon channel activation, PIP2 interacts with the S4-S5 linker and is involved in channel gating. Calcium suppresses KCNQ2-KCNQ3 channel currents, with calcium-bound calmodulin inducing a change in channel configuration which leads to the reduction of channel affinity for PIP2 and subsequent current suppression. M-channel is activated by the anticonvulsant retigabine. Functionally, pore-forming subunit of the voltage-gated potassium (Kv) M-channel which is responsible for the M-current, a key controller of neuronal excitability. M-channel is composed of pore-forming subunits KCNQ2 and KCNQ3 assembled as heterotetramers. The native M-current has a slowly activating and deactivating potassium conductance which plays a critical role in determining the subthreshold electrical excitability of neurons as well as the responsiveness to synaptic inputs. M-channel is selectively permeable in vitro to other cations besides potassium, in decreasing order of affinity K(+) &gt; Rb(+) &gt; Cs(+) &gt; Na(+). M-channel association with SLC5A3/SMIT1 alters channel ion selectivity, increasing Na(+) and Cs(+) permeation relative to K(+). Suppressed by activation of M1 muscarinic acetylcholine receptors. KCNQ3 also associates with KCNQ5 to form a functional channel in vitro and may also contribute to the M-current in brain. This chain is Potassium voltage-gated channel subfamily KQT member 3, found in Homo sapiens (Human).